A 189-amino-acid chain; its full sequence is Movement protein (189 aa).

It belongs to the tombusvirus/aureusvirus movement protein p22 family. Interacts with host protein HFI22. In terms of processing, phosphorylated.

It localises to the host membrane. Functionally, transports viral genome to neighboring plant cells directly through plasmosdesmata, without any budding. The movement protein allows efficient cell to cell propagation, by bypassing the host cell wall barrier. The sequence is that of Movement protein from Tomato bushy stunt virus (strain BS-3) (TBSV).